Reading from the N-terminus, the 501-residue chain is Na(+)/H(+) antiporter NhaB (501 aa).

11 helical membrane passes run 24–44 (VILLFLVINPIVMYLLGPGVA), 46–66 (WLLIGEFIFTLAMALKCYPLL), 90–110 (VLTNFPVILLLMFMVAGIYFM), 145–165 (FLDALTVTAVIISVAVGFFSV), 206–226 (LLMHGAIGTALGGVATMVGEP), 239–259 (FAGFFLHMAPVSIPVLFAGLA), 302–319 (ALWIQAVAAVILVFGLAF), 351–371 (FQESLPFTSLLVVFFAVVAVI), 395–415 (MFFIANGLLSMISDNVFVATV), 450–470 (VATPNGQAAFLFLLTSAIAPL), and 478–498 (MVIMALPYTIVMGGVGLYMVT).

It belongs to the NhaB Na(+)/H(+) (TC 2.A.34) antiporter family.

The protein resides in the cell inner membrane. It carries out the reaction 2 Na(+)(in) + 3 H(+)(out) = 2 Na(+)(out) + 3 H(+)(in). Functionally, na(+)/H(+) antiporter that extrudes sodium in exchange for external protons. This Marinobacter nauticus (strain ATCC 700491 / DSM 11845 / VT8) (Marinobacter aquaeolei) protein is Na(+)/H(+) antiporter NhaB.